The chain runs to 422 residues: G-protein coupled receptor 83 (422 aa).

A signal peptide spans 1–16 (MGRRGALLCLLPLLRA). The Extracellular portion of the chain corresponds to 17–70 (AERPEGRADEPGLEAALAGPNASHFFWSNYSFSDWQNFVGRRRYGAESQNPTVK). N37 and N45 each carry an N-linked (GlcNAc...) asparagine glycan. Residues 71-91 (ALLVVAYSFIIVFSLFGNVLV) traverse the membrane as a helical segment. Residues 92 to 106 (CHVIFKNQRMRSATS) are Cytoplasmic-facing. Residues 107–128 (LFIVNLAVADILITLLNTPFTL) traverse the membrane as a helical segment. Topologically, residues 129–144 (VRFVNSTWVFGKGMCH) are extracellular. N-linked (GlcNAc...) asparagine glycosylation occurs at N133. The helical transmembrane segment at 145 to 166 (VSRFAQYCSLHVSALTLTAIAV) threads the bilayer. Residues 167-185 (DRHQVIMHPLKPRISITKG) are Cytoplasmic-facing. The chain crosses the membrane as a helical span at residues 186-207 (VIYITVIWTMATFFSLPHAICQ). Topologically, residues 208 to 237 (KLFTFKYSEDIVRSLCLPDFPEPADLFWKY) are extracellular. Residues 238-259 (LDLATFILLYILPLLIISVAYA) form a helical membrane-spanning segment. Over 260 to 292 (RVAKKLWLCNTIGDVTTEQYLALRRKKKKTIKM) the chain is Cytoplasmic. A helical transmembrane segment spans residues 293–314 (LMLVVVLFALCWFPLNCYVLLL). The Extracellular portion of the chain corresponds to 315–326 (SSKVIHTNNALY). A helical membrane pass occupies residues 327-347 (FAFHWFAMSSTCYNPFIYCWL). Residues 348 to 422 (NENFRIELKA…SSVEPIVAMS (75 aa)) lie on the Cytoplasmic side of the membrane.

This sequence belongs to the G-protein coupled receptor 1 family.

The protein resides in the cell membrane. In terms of biological role, G-protein coupled receptor for PEN, a neuropeptide produced from the precursor protein, proSAAS (encoded by PCSK1N). Acts through a G(i)- and G(q)-alpha-alpha-mediated pathway in response to PEN. Plays a role in food intake and body weight regulation. May contribute to the regulation of anxiety-related behaviors. In Canis lupus familiaris (Dog), this protein is G-protein coupled receptor 83 (GPR83).